The primary structure comprises 617 residues: Manganese lipoxygenase (617 aa).

The signal sequence occupies residues 1 to 17 (MRIGLLAFAVAARYVEA). Over residues 23 to 48 (GEEVASSSAPTTLPSTSSSSALPSPT) the composition is skewed to low complexity. A disordered region spans residues 23 to 59 (GEEVASSSAPTTLPSTSSSSALPSPTKYTLPHEDPNP). Asparagine 109, asparagine 119, and asparagine 160 each carry an N-linked (GlcNAc...) asparagine glycan. The Lipoxygenase domain maps to 122-617 (LRDIQSHGGL…PAVNPFFLSI (496 aa)). Mn(2+)-binding residues include histidine 293, histidine 297, histidine 479, and asparagine 483. Residue asparagine 547 is glycosylated (N-linked (GlcNAc...) asparagine). Residue isoleucine 617 coordinates Mn(2+).

This sequence belongs to the lipoxygenase family. Manganese lipoxygenase subfamily. The cofactor is Mn(2+).

It localises to the secreted. The catalysed reaction is (9Z,12Z)-octadecadienoate + O2 = (9S)-hydroperoxy-(10E,12Z)-octadecadienoate. It catalyses the reaction (9Z,12Z)-octadecadienoate + O2 = (11S)-hydroperoxy-(9Z,12Z)-octadecadienoate. It carries out the reaction (9Z,12Z)-octadecadienoate + O2 = (13R)-hydroperoxy-(9Z,11E)-octadecadienoate. The enzyme catalyses (9Z,12Z,15Z)-octadecatrienoate + O2 = (9S)-hydroperoxy-(10E,12Z,15Z)-octadecatrienoate. The catalysed reaction is (9Z,12Z,15Z)-octadecatrienoate + O2 = (11R)-hydroperoxy-(9Z,12Z,15Z)-octadecatrienoate. It catalyses the reaction (9Z,12Z,15Z)-octadecatrienoate + O2 = (13R)-hydroperoxy-(9Z,11E,15Z)-octadecatrienoate. Its function is as follows. Lipoxygenase that metabolizes linoleic and alpha-linolenic acids to 9S-, 11- and 13R-hydroperoxy fatty acids. At the end of lipoxygenation, the intermediate products 11S-HPODE and 13R-HPODE from linoleic acid are then transformed into 9S-HPODE as the final product. The intermediate product 11R-HPOTrE from alpha-linolenic acid is transformed into 9S-HPOTrE and 13R-HPOTrE as the final products. 9S-HPOTrE is further oxidized by the enzyme to 9,16-DiHOTrE as the end product. Also acts on gamma-linolenic acid producing 9-HOTrE(n-6) as the main metabolite. This Nakataea oryzae (Rice stem rot fungus) protein is Manganese lipoxygenase.